A 166-amino-acid chain; its full sequence is Nicotine metabolites export pump subunit NepB (166 aa).

Transmembrane regions (helical) follow at residues 51 to 71 (LHAW…TVIL), 77 to 97 (FQLP…FFLL), 108 to 128 (VAYA…GAII), and 133 to 153 (VTLG…ILNL).

This sequence belongs to the drug/metabolite transporter (DMT) superfamily. Small multidrug resistance (SMR) (TC 2.A.7.1) family. NepA/NepB subfamily. In terms of assembly, the efflux pump is composed of NepA and NepB.

Its subcellular location is the cell membrane. Functionally, component of an efflux pump responsible for the transport of nicotine breakdown products, in particular methylamine, out of the cell. This pump apparently serves as a metabolic valve for nicotine catabolites and may protect the bacteria from the potentially toxic side effects of these compounds. This chain is Nicotine metabolites export pump subunit NepB (nepB), found in Paenarthrobacter nicotinovorans (Arthrobacter nicotinovorans).